A 430-amino-acid polypeptide reads, in one-letter code: DNA repair protein recA homolog 3, mitochondrial (430 aa).

The N-terminal 35 residues, 1 to 35 (MARILRNVYSLRSSLFSSELLRRSVVGTSFQLRGF), are a transit peptide targeting the mitochondrion. 119 to 126 (GPEASGKT) contributes to the ATP binding site. Residues 385–415 (DEAADKETESESEEEDSLRVVVSPDNTDDES) form a disordered region.

It belongs to the RecA family.

The protein resides in the mitochondrion. Functionally, involved in recombination ability and DNA strand transfer activity. In Arabidopsis thaliana (Mouse-ear cress), this protein is DNA repair protein recA homolog 3, mitochondrial.